The sequence spans 566 residues: Transcription factor opdL (566 aa).

The zn(2)-C6 fungal-type DNA-binding region spans 15 to 45 (CATCARAKCRCVPRNGGRGRCERCHHLNKEC).

The protein localises to the nucleus. In terms of biological role, transcription factor; part of the gene cluster that mediates the biosynthesis of oxopyrrolidines, polyketide-amino acid hybrid compounds with feature structures of tetramic acid. The chain is Transcription factor opdL from Penicillium oxalicum (strain 114-2 / CGMCC 5302) (Penicillium decumbens).